We begin with the raw amino-acid sequence, 375 residues long: Growth/differentiation factor 8 (375 aa).

The N-terminal stretch at 1–18 (MQKLQISVYIYLFVLILA) is a signal peptide. Positions 19 to 266 (GPVDLNENSE…VTDTPKRSRR (248 aa)) are excised as a propeptide. Residue Asn71 is glycosylated (N-linked (GlcNAc...) asparagine). Cystine bridges form between Cys272/Cys282, Cys281/Cys340, Cys309/Cys372, and Cys313/Cys374.

It belongs to the TGF-beta family. As to quaternary structure, homodimer; disulfide-linked. Interacts with WFIKKN2, leading to inhibit its activity. Interacts with FSTL3. Post-translationally, synthesized as large precursor molecule that undergoes proteolytic cleavage to generate an N-terminal propeptide and a disulfide linked C-terminal dimer, which is the biologically active molecule. The circulating form consists of a latent complex of the C-terminal dimer and other proteins, including its propeptide, which maintain the C-terminal dimer in a latent, inactive state. Ligand activation requires additional cleavage of the prodomain by a tolloid-like metalloproteinase.

The protein localises to the secreted. In terms of biological role, acts specifically as a negative regulator of skeletal muscle growth. The sequence is that of Growth/differentiation factor 8 (MSTN) from Equus caballus (Horse).